The following is a 161-amino-acid chain: Nucleotide-binding protein Tbd_1846 (161 aa).

It belongs to the YajQ family.

Functionally, nucleotide-binding protein. In Thiobacillus denitrificans (strain ATCC 25259 / T1), this protein is Nucleotide-binding protein Tbd_1846.